The following is a 571-amino-acid chain: Urease subunit alpha (571 aa).

The 439-residue stretch at Gly-133–Phe-571 folds into the Urease domain. His-138, His-140, and Lys-221 together coordinate Ni(2+). N6-carboxylysine is present on Lys-221. His-223 lines the substrate pocket. Residues His-250 and His-276 each coordinate Ni(2+). Residue His-324 is the Proton donor of the active site. Ni(2+) is bound at residue Asp-364.

Belongs to the metallo-dependent hydrolases superfamily. Urease alpha subunit family. Heterotrimer of UreA (gamma), UreB (beta) and UreC (alpha) subunits. Three heterotrimers associate to form the active enzyme. Ni cation is required as a cofactor. Post-translationally, carboxylation allows a single lysine to coordinate two nickel ions.

The protein localises to the cytoplasm. The enzyme catalyses urea + 2 H2O + H(+) = hydrogencarbonate + 2 NH4(+). It participates in nitrogen metabolism; urea degradation; CO(2) and NH(3) from urea (urease route): step 1/1. This chain is Urease subunit alpha, found in Staphylococcus aureus (strain MRSA252).